Here is a 131-residue protein sequence, read N- to C-terminus: Lysosomal enzyme trafficking factor (131 aa).

The next 2 helical transmembrane spans lie at methionine 8 to phenylalanine 28 and leucine 66 to leucine 86.

The protein belongs to the LYSET family.

It localises to the golgi apparatus membrane. Its function is as follows. Required for mannose-6-phosphate-dependent trafficking of lysosomal enzymes. LYSET bridges GlcNAc-1-phosphate transferase (GNPTAB), to the membrane-bound transcription factor site-1 protease (MBTPS1), thus allowing proteolytic activation of the GNPTAB. GNPTAB is involved in the regulation of M6P-dependent Golgi-to-lysosome trafficking of lysosomal enzymes. LYSET is thus an essential factor for maturation and delivery of lysosomal hydrolases. This chain is Lysosomal enzyme trafficking factor (lyset-a), found in Xenopus laevis (African clawed frog).